A 294-amino-acid chain; its full sequence is Foldase protein PrsA 1 (294 aa).

A signal peptide spans 1-21 (MTKLKKVMISVIAATLLLLAG). Cys-22 is lipidated: N-palmitoyl cysteine. Residue Cys-22 is the site of S-diacylglycerol cysteine attachment. A PpiC domain is found at 135–226 (EPDITVRHIL…YGYHLIQLVK (92 aa)).

The protein belongs to the PrsA family.

The protein resides in the cell membrane. The enzyme catalyses [protein]-peptidylproline (omega=180) = [protein]-peptidylproline (omega=0). In terms of biological role, plays a major role in protein secretion by helping the post-translocational extracellular folding of several secreted proteins. The chain is Foldase protein PrsA 1 from Listeria monocytogenes serotype 4b (strain F2365).